The following is a 161-amino-acid chain: 18.1 kDa class I heat shock protein (161 aa).

In terms of domain architecture, sHSP spans 47–161 (ETAAFAGARI…PDVKSIQVTG (115 aa)).

This sequence belongs to the small heat shock protein (HSP20) family. May form oligomeric structures.

Its subcellular location is the cytoplasm. The protein is 18.1 kDa class I heat shock protein (HSP18.1) of Oryza sativa subsp. japonica (Rice).